Consider the following 513-residue polypeptide: Glycogen synthase (513 aa).

Lys-47 contacts ADP-alpha-D-glucose.

It belongs to the glycosyltransferase 1 family. Bacterial/plant glycogen synthase subfamily.

The enzyme catalyses [(1-&gt;4)-alpha-D-glucosyl](n) + ADP-alpha-D-glucose = [(1-&gt;4)-alpha-D-glucosyl](n+1) + ADP + H(+). It functions in the pathway glycan biosynthesis; glycogen biosynthesis. In terms of biological role, synthesizes alpha-1,4-glucan chains using ADP-glucose. The polypeptide is Glycogen synthase (Pseudomonas paraeruginosa (strain DSM 24068 / PA7) (Pseudomonas aeruginosa (strain PA7))).